Consider the following 452-residue polypeptide: Probable 1,4-beta-D-glucan cellobiohydrolase A (452 aa).

The N-terminal stretch at M1–A17 is a signal peptide. N81 carries N-linked (GlcNAc...) asparagine glycosylation. The Nucleophile role is filled by E226. The Proton donor role is filled by E231. An N-linked (GlcNAc...) asparagine glycan is attached at N284. The interval D406 to P432 is disordered. Basic and acidic residues predominate over residues T416–H431.

Belongs to the glycosyl hydrolase 7 (cellulase C) family.

The protein localises to the secreted. It catalyses the reaction Hydrolysis of (1-&gt;4)-beta-D-glucosidic linkages in cellulose and cellotetraose, releasing cellobiose from the non-reducing ends of the chains.. In terms of biological role, the biological conversion of cellulose to glucose generally requires three types of hydrolytic enzymes: (1) Endoglucanases which cut internal beta-1,4-glucosidic bonds; (2) Exocellobiohydrolases that cut the disaccharide cellobiose from the non-reducing end of the cellulose polymer chain; (3) Beta-1,4-glucosidases which hydrolyze the cellobiose and other short cello-oligosaccharides to glucose. This is Probable 1,4-beta-D-glucan cellobiohydrolase A (cbhA) from Neosartorya fischeri (strain ATCC 1020 / DSM 3700 / CBS 544.65 / FGSC A1164 / JCM 1740 / NRRL 181 / WB 181) (Aspergillus fischerianus).